The primary structure comprises 155 residues: Endoribonuclease YbeY (155 aa).

Zn(2+) contacts are provided by histidine 117, histidine 121, and histidine 127.

The protein belongs to the endoribonuclease YbeY family. Requires Zn(2+) as cofactor.

The protein localises to the cytoplasm. In terms of biological role, single strand-specific metallo-endoribonuclease involved in late-stage 70S ribosome quality control and in maturation of the 3' terminus of the 16S rRNA. This is Endoribonuclease YbeY from Treponema denticola (strain ATCC 35405 / DSM 14222 / CIP 103919 / JCM 8153 / KCTC 15104).